The primary structure comprises 428 residues: C4-dicarboxylate transport protein (428 aa).

The next 8 helical transmembrane spans lie at 8–28, 44–64, 76–96, 142–162, 184–206, 222–242, 326–346, and 352–372; these read SLYF…HFYP, LIKM…IAGM, VALL…LIIV, IGAF…LFGF, VIFG…AMAF, LIIC…GSIA, IVHQ…AAGV, and IVLA…LALI.

Belongs to the dicarboxylate/amino acid:cation symporter (DAACS) (TC 2.A.23) family.

The protein localises to the cell inner membrane. Its function is as follows. Responsible for the transport of dicarboxylates such as succinate, fumarate, and malate from the periplasm across the membrane. This chain is C4-dicarboxylate transport protein, found in Shigella flexneri.